A 117-amino-acid chain; its full sequence is Large ribosomal subunit protein bL19 (117 aa).

The protein belongs to the bacterial ribosomal protein bL19 family.

This protein is located at the 30S-50S ribosomal subunit interface and may play a role in the structure and function of the aminoacyl-tRNA binding site. In Bacteroides thetaiotaomicron (strain ATCC 29148 / DSM 2079 / JCM 5827 / CCUG 10774 / NCTC 10582 / VPI-5482 / E50), this protein is Large ribosomal subunit protein bL19.